Reading from the N-terminus, the 481-residue chain is ATP synthase subunit beta, chloroplastic (481 aa).

Residue 162-169 (GGAGVGKT) coordinates ATP.

The protein belongs to the ATPase alpha/beta chains family. As to quaternary structure, F-type ATPases have 2 components, CF(1) - the catalytic core - and CF(0) - the membrane proton channel. CF(1) has five subunits: alpha(3), beta(3), gamma(1), delta(1), epsilon(1). CF(0) has four main subunits: a(1), b(1), b'(1) and c(9-12).

The protein resides in the plastid. It is found in the chloroplast thylakoid membrane. The catalysed reaction is ATP + H2O + 4 H(+)(in) = ADP + phosphate + 5 H(+)(out). Functionally, produces ATP from ADP in the presence of a proton gradient across the membrane. The catalytic sites are hosted primarily by the beta subunits. This is ATP synthase subunit beta, chloroplastic from Oltmannsiellopsis viridis (Marine flagellate).